The following is a 348-amino-acid chain: MKILIIGPSWVGDMVMSHSLYQQLKQQYPKSQIDVMAPDWCRPLLARMPEVHKAITMPIGHGAFRLMERYQIGKSLRNQYDLAIVLPNSFKSAFIPFFARIAHRRGWKGESRYCLLNDLRTNKNDYPMMVQRYVALAFEATQVPKPDDLPIAFPYLQTQADEIAQTKAKFAQKLTATENRPLIGFCPGAEFGPAKRWPHYHYAKLAEILIEKGFAICLFGSKKDQIIAEQIRLGLAEHSQRYCINLAGQTDLNQAVDLIADCRAIVSNDSGLMHIAAALNKPKPLVALYGPTSPSYTPPLSKQAVIIRLIDGGLIKIRKGEAKEGYHQSLIDITPDRVVQELNQLLAC.

The protein belongs to the glycosyltransferase 9 family.

It carries out the reaction an L-alpha-D-Hep-(1-&gt;5)-[alpha-Kdo-(2-&gt;4)]-alpha-Kdo-(2-&gt;6)-lipid A + ADP-L-glycero-beta-D-manno-heptose = an L-alpha-D-Hep-(1-&gt;3)-L-alpha-D-Hep-(1-&gt;5)-[alpha-Kdo-(2-&gt;4)]-alpha-Kdo-(2-&gt;6)-lipid A + ADP + H(+). Its pathway is bacterial outer membrane biogenesis; LOS core biosynthesis. In terms of biological role, glycosyltransferase involved in the biosynthesis of the core oligosaccharide region of lipooligosaccharide (LOS). Catalyzes the addition of a heptose unit to the heptosyl-Kdo2-lipid A module. The chain is Lipooligosaccharide heptosyltransferase 2 from Haemophilus ducreyi (strain 35000HP / ATCC 700724).